Reading from the N-terminus, the 551-residue chain is MNDHILISDGEDQTTPLPSLSKRARKYPISAILISDSDPTPQKQPPESSFTPIFVPETPLSDDFSVVKCSFGSRALASNREDKFSGKRIISLDSEFEDSPRPETSKKNESVLAGLREPRFGLEAETSEAYYKNTRIPETNLDDDTSWMHEVSFRSSPTNDTIEVVSDQEKEDISVEKIGRKKKIRTTTLPVPGEALPKKRQSKEDKTSAMEEKKLRKEQERLEKAASKAEEAERKRLEKEKKKWEKGKLALKSIVAEIDTKVLEGSIGGLLLSRFSEKGITIHVGPNPIERSIVWTMTIPEDIAPLFPQGPKIPYLLLVYDAEEFCNLVANGKFLEIISRVQDRYPSYTVCCLTNKLMSYVKKREKEEYKNPGNWRRPPIDEVLAKLTTHYVKVHSRHCVDEAEVAEHIVGLTSSLASCQFRKKLTMLSVSANGALVSKDSVDKHLIKKSPWLKALVAIPKVQPRYALAVWKKYPSMKSLLKVYMDRNKSVHEKEFLLKDLKVEGLVGGDIRLGEICSKRIYRVLMSHDGAIKTDDVENGAAFFTDSPGVN.

2 disordered regions span residues 1 to 55 and 187 to 239; these read MNDH…PIFV and TTLP…RLEK. Positions 37–51 are enriched in polar residues; that stretch reads SDPTPQKQPPESSFT. Residues 202–239 are compositionally biased toward basic and acidic residues; it reads SKEDKTSAMEEKKLRKEQERLEKAASKAEEAERKRLEK. The stretch at 203-253 forms a coiled coil; the sequence is KEDKTSAMEEKKLRKEQERLEKAASKAEEAERKRLEKEKKKWEKGKLALKS. An ERCC4 domain is found at 287 to 484; sequence NPIERSIVWT…PSMKSLLKVY (198 aa).

This sequence belongs to the EME1/MMS4 family. Forms a heterodimer with MUS81. Requires Mg(2+) as cofactor. The cofactor is Ca(2+).

It is found in the nucleus. Functionally, interacts with MUS81 to form a DNA structure-specific endonuclease with substrate preference for branched DNA structures with a 5'-end at the branch nick. Typical substrates include 3'-flap structures, D-loops, replication forks, nicked Holliday junctions and also intact Holliday junctions with a reduced efficiency. May be required in mitosis for the processing of stalled or collapsed replication fork intermediates. Plays a role in DNA repair and in genotoxic stress-induced homologous recombination (HR) in somatic cells. Mediates a subset of meiotic recombination events that are insensitive to crossover interference. In Arabidopsis thaliana (Mouse-ear cress), this protein is Crossover junction endonuclease EME1B (EME1B).